Reading from the N-terminus, the 203-residue chain is Thymidylate kinase (203 aa).

14–21 (GGEGIGKS) provides a ligand contact to ATP.

It belongs to the thymidylate kinase family.

The catalysed reaction is dTMP + ATP = dTDP + ADP. Its function is as follows. Phosphorylation of dTMP to form dTDP in both de novo and salvage pathways of dTTP synthesis. This Rickettsia conorii (strain ATCC VR-613 / Malish 7) protein is Thymidylate kinase.